The following is a 184-amino-acid chain: MLTTLRSRCSSLLLNQSWKLAPNRIFASSPSFSSSAGISNVSEILTLPEVEKILADVKADNVTVIPTHNHCFWADFTVIATGRSDWHLRNIAQALVYRAKQKQKGAKHVMLPSVQGYNSKWIVIDYGKFVVHALDEKARGYFNLESLWSAESSGTDTSDQDLQNVFVKVRPKNNSKRKPAKVSS.

The transit peptide at 1-39 (MLTTLRSRCSSLLLNQSWKLAPNRIFASSPSFSSSAGIS) directs the protein to the mitochondrion.

The protein belongs to the Iojap/RsfS family.

Its subcellular location is the mitochondrion. May be a ribosome silencing factor involved in organelle biogenesis and required for germination. This chain is Protein Iojap-related, mitochondrial, found in Arabidopsis thaliana (Mouse-ear cress).